The primary structure comprises 251 residues: Adenylate kinase (251 aa).

Residue 46–51 coordinates ATP; sequence GAGKGT. The segment at 66–95 is NMP; the sequence is ATGDMLRSQVQQQTPLGVEAKKIMDAGGLV. Residues threonine 67, arginine 72, 93 to 95, 122 to 125, and glutamine 129 contribute to the AMP site; these read GLV and GFPR. An LID region spans residues 163-200; it reads GRLVHPASGRSYHKVFNPPKKEMIDDITGEALVQRSDD. ATP-binding positions include arginine 164 and 173 to 174; that span reads SY. Arginine 197 and arginine 208 together coordinate AMP. Glutamine 236 contacts ATP.

The protein belongs to the adenylate kinase family. AK2 subfamily. As to quaternary structure, monomer.

It is found in the cytoplasm. The protein resides in the cytosol. The protein localises to the mitochondrion intermembrane space. The enzyme catalyses AMP + ATP = 2 ADP. Catalyzes the reversible transfer of the terminal phosphate group between ATP and AMP. Plays an important role in cellular energy homeostasis and in adenine nucleotide metabolism. Adenylate kinase activity is critical for regulation of the phosphate utilization and the AMP de novo biosynthesis pathways. This Yarrowia lipolytica (strain CLIB 122 / E 150) (Yeast) protein is Adenylate kinase.